The chain runs to 515 residues: 2-isopropylmalate synthase (515 aa).

The Pyruvate carboxyltransferase domain maps to 4–266 (INIFDTTLRD…ETRLNLQEIK (263 aa)). D13, H201, H203, and N237 together coordinate Mn(2+). A regulatory domain region spans residues 391-515 (QLSSLQVQYG…RAENQKVAMQ (125 aa)).

It belongs to the alpha-IPM synthase/homocitrate synthase family. LeuA type 1 subfamily. As to quaternary structure, homodimer. Mn(2+) serves as cofactor.

Its subcellular location is the cytoplasm. The catalysed reaction is 3-methyl-2-oxobutanoate + acetyl-CoA + H2O = (2S)-2-isopropylmalate + CoA + H(+). It functions in the pathway amino-acid biosynthesis; L-leucine biosynthesis; L-leucine from 3-methyl-2-oxobutanoate: step 1/4. Its function is as follows. Catalyzes the condensation of the acetyl group of acetyl-CoA with 3-methyl-2-oxobutanoate (2-ketoisovalerate) to form 3-carboxy-3-hydroxy-4-methylpentanoate (2-isopropylmalate). The sequence is that of 2-isopropylmalate synthase from Geobacillus sp. (strain WCH70).